The sequence spans 396 residues: Probable sugar efflux transporter (396 aa).

12 helical membrane passes run V15–L35, V50–L70, L81–F101, V103–A123, A136–L156, F170–L190, P209–Y229, F246–G266, A275–A295, I299–M319, V333–G353, and M364–F384.

The protein belongs to the major facilitator superfamily. SotB (TC 2.A.1.2) family.

It localises to the cell inner membrane. Involved in the efflux of sugars. The physiological role may be the reduction of the intracellular concentration of toxic sugars or sugar metabolites. The protein is Probable sugar efflux transporter of Escherichia coli O17:K52:H18 (strain UMN026 / ExPEC).